Reading from the N-terminus, the 178-residue chain is Cyclin-dependent kinase inhibitor 1B (178 aa).

Positions 1-11 are enriched in polar residues; sequence MSNVRVSNGSP. Residues 1–31 form a disordered region; sequence MSNVRVSNGSPSLERMDARQAEYPKPSACRN. Phosphoserine; by UHMK1 is present on Ser-10. The tract at residues 51–91 is interaction with CDK2; the sequence is DMEEASQRKWNFDFQNHKPLEGKYEWQEVEKGSLPEFYYRP. Position 74 is a phosphotyrosine; by SRC (Tyr-74). Residues 87–178 form a disordered region; the sequence is FYYRPPRPPK…RTEENVSDGS (92 aa). The residue at position 88 (Tyr-88) is a Phosphotyrosine; by ABL, LYN, SRC and JAK2. Tyr-89 is subject to Phosphotyrosine. The segment covering 104–113 has biased composition (polar residues); sequence QESQDVSGTR. Positions 126–137 are enriched in basic and acidic residues; that stretch reads EDTHLVDQKTDT. The short motif at 153–169 is the Nuclear localization signal element; it reads KRPATDDSSPQNKRANR. At Thr-157 the chain carries Phosphothreonine; by CaMK1, PKB/AKT1, RPS6KA1, RPS6KA3 and PIM1. Thr-170 carries the phosphothreonine modification.

It belongs to the CDI family. As to quaternary structure, forms a ternary complex composed of CCNE1, CDK2 and CDKN1B. Interacts directly with CCNE1; the interaction is inhibited by CDK2-dependent phosphorylation. Interacts with COPS5, subunit of the COP9 signalosome complex; the interaction leads to CDKN1B degradation. Interacts with NUP50; the interaction leads to nuclear import and degradation of phosphorylated CDKN1B. Interacts with CCND1 and SNX6. Interacts (Thr-198-phosphorylated form) with 14-3-3 proteins, binds strongly YWHAQ, weakly YWHAE and YWHAH, but not YWHAB nor YWHAZ; the interaction with YWHAQ results in translocation to the cytoplasm. Interacts with AKT1 and LYN; the interactions lead to cytoplasmic mislocation, phosphorylation of CDKN1B and inhibition of cell cycle arrest. Forms a ternary complex with CCNA2 and CDK2; CDKN1B inhibits the kinase activity of CDK2 through conformational rearrangements. Interacts (unphosphorylated form) with CDK2. Forms a complex with CDK2 and SPDYA, but does not directly interact with SPDYA. Forms a ternary complex composed of cyclin D, CDK4 and CDKN1B. Interacts (phosphorylated on Tyr-88 and Tyr-89) with CDK4; the interaction is required for cyclin D and CDK4 complex assembly, induces nuclear translocation and activates the CDK4 kinase activity. Interacts with GRB2. Interacts with PIM1. Identified in a complex with SKP1, SKP2 and CKS1B. Interacts with UHMK1; the interaction leads to cytoplasmic mislocation, phosphorylation of CDKN1B and inhibition of cell cycle arrest. Also interacts with CDK1. Dephosphorylated by PPM1H, leading to CDKN1B stability. Post-translationally, phosphorylated; phosphorylation occurs on serine, threonine and tyrosine residues. Phosphorylation on Ser-10 is the major site of phosphorylation in resting cells, takes place at the G(0)-G(1) phase and leads to protein stability. Phosphorylation on other sites is greatly enhanced by mitogens, growth factors, MYC and in certain cancer cell lines. The phosphorylated form found in the cytoplasm is inactivate. Phosphorylation on Tyr-88 has no effect on binding CDK complexes. In terms of processing, ubiquitinated; in the cytoplasm by the KPC complex (composed of RNF123/KPC1 and UBAC1/KPC2) and, in the nucleus, by SCF(SKP2). The latter requires prior phosphorylation on Thr-187. Ubiquitinated; by a TRIM21-containing SCF(SKP2)-like complex; leads to its degradation. Subject to degradation in the lysosome. Interaction with SNX6 promotes lysosomal degradation.

It is found in the nucleus. The protein resides in the cytoplasm. Its subcellular location is the endosome. In terms of biological role, important regulator of cell cycle progression. Inhibits the kinase activity of CDK2 bound to cyclin A, but has little inhibitory activity on CDK2 bound to SPDYA. Involved in G1 arrest. Potent inhibitor of cyclin E- and cyclin A-CDK2 complexes. Forms a complex with cyclin type D-CDK4 complexes and is involved in the assembly, stability, and modulation of CCND1-CDK4 complex activation. Acts either as an inhibitor or an activator of cyclin type D-CDK4 complexes depending on its phosphorylation state and/or stoichometry. The protein is Cyclin-dependent kinase inhibitor 1B (CDKN1B) of Neovison vison (American mink).